A 211-amino-acid chain; its full sequence is Large ribosomal subunit protein uL3 (211 aa).

This sequence belongs to the universal ribosomal protein uL3 family. Part of the 50S ribosomal subunit. Forms a cluster with proteins L14 and L19.

One of the primary rRNA binding proteins, it binds directly near the 3'-end of the 23S rRNA, where it nucleates assembly of the 50S subunit. The sequence is that of Large ribosomal subunit protein uL3 from Trichlorobacter lovleyi (strain ATCC BAA-1151 / DSM 17278 / SZ) (Geobacter lovleyi).